Here is a 643-residue protein sequence, read N- to C-terminus: Phosphomethylpyrimidine synthase (643 aa).

Substrate-binding positions include Asn248, Met277, Tyr306, His342, 362 to 364 (SRG), 403 to 406 (DGLR), and Glu442. His446 serves as a coordination point for Zn(2+). Tyr469 is a substrate binding site. His510 is a binding site for Zn(2+). The [4Fe-4S] cluster site is built by Cys590, Cys593, and Cys598.

This sequence belongs to the ThiC family. In terms of assembly, homodimer. Requires [4Fe-4S] cluster as cofactor.

The enzyme catalyses 5-amino-1-(5-phospho-beta-D-ribosyl)imidazole + S-adenosyl-L-methionine = 4-amino-2-methyl-5-(phosphooxymethyl)pyrimidine + CO + 5'-deoxyadenosine + formate + L-methionine + 3 H(+). The protein operates within cofactor biosynthesis; thiamine diphosphate biosynthesis. Catalyzes the synthesis of the hydroxymethylpyrimidine phosphate (HMP-P) moiety of thiamine from aminoimidazole ribotide (AIR) in a radical S-adenosyl-L-methionine (SAM)-dependent reaction. In Burkholderia ambifaria (strain ATCC BAA-244 / DSM 16087 / CCUG 44356 / LMG 19182 / AMMD) (Burkholderia cepacia (strain AMMD)), this protein is Phosphomethylpyrimidine synthase.